The sequence spans 2344 residues: MAAMSRLTGMTTAILPEKKPLSFFLDLRDKTPPCCIRATGRLAWPVFPGQNGKEGPLETCNMCGKWLNGFGNFGLEDLGDVCLRSIAQQKHKFGPVCLCNRVYLHDCGRWRRRSRFLKHYKALNKVIPCAYQFVESFPTPIFEGEVDDLFVELGAPTSMGFMDKKLLKKGKKLMDKFVDVDEPCLTSRDASLLDSIASDNTIRAKLEEEYGVEMVQAARDRKDFMKNLRLALDNWPANPVTWYRKLGNITKKGKQWAKKVVYGARKVTDPLKTLASILLVGLHNVIAVDTTVMLSTFNPVNLLAILMDWNNDLTGFFATLVRLLELYGVVQATVNLIIEGVKSFWDKVVCATDRCFDLLKRLFDTFEDSVPTGPTAGCLIFMAFVFSTVVGYLPNNSVITTFMKGAGKLTTFAGVVGAIRTLWITINQHMVAKDLTSVQQKVMTVVKMANEAATLDQLEIVSCLCSDLETTLTNRCTLPSYNQHLGILNASQKVISDLHTMVLGKINTSKQRPQPVAVIFKGAPGIGKTYLVHRIARDLGCQHPSTINFGLDHFDSYTGEEVAIADESNTCGDGESWVELFIQMVNTNPCPLNCDKAENKNKVFNSKYLLCTTNSNMILNATHPRAGAFYRRVMIVEARNKAVESWQATRHGSKPGKSCYNKDMSHLTFQVYPHNMPAPGFVFVGDKLVKSQVTPREYKYSELLDLIKSEHPDVASFEGANKFNFVYPDAQYDQALLMWKQYFVMYGCVARLAKNFVDDIPYNQVHISRASDPKIEGCVEYQCKFQHLWRMVPQFVLGCVNMTNQLGTPLTQQQLDRITNGVEGVTVTTVNNILPFHSQTTLINPSFIKLIWAVRKHLKGLSGVTKVAQFIWRVMTNPVDAYGTLVRTLTGAATFSDDPVSTTIICSNCTIQLHSCGGLLVRYSRDPVPVASDNVDRGDQGVDVFTDPNLISGFSWRQIAHLFVEVISHLCANHLVNLATMAALGAVATKAFQGVKGKTKRGRGARVNLGNDEYDEWQAARREFVNAHDMTAEEYLAMKNKAAMGSDDQDSIMFRSWWTRRQLRPDEDQVTIVGRSGVRNEVIRTRVRQTPRGPKTLDDGGFYDNDYEGLPGFMRHNGSGRMIHIGNGLYISNTHTARSSCSEIVTCSPTTDLCLVKGEAIRSVAQIAEGTPVCDWKKSPISTYGIKKTLSDSTKIDVLAYDGCTQTTHGDCGLPLYDSSGKIVAIHTGKLLGFSKMCTLIDLTITKGVYETSNFFCGEPIDYRGITAHRLVGAEPRPPVSGTRYAKVPGVPDEYKTGYRPANLGRSDPDSDKSLMNIAVKNLQVYQQEPKLDKVDEFIERAAADVLGYLRFLTKGERQANLNFKAAFNTLDLSTSCGPFAPGKKIDHVKDGVMDQVLAKHLYKCWSVANSGKALHHIYACGLKDELRPLDKVKEGKKRLLWGCDVGVAVCAAAVFHNICYELKMVARFGPIAVGVDMTSRDVDVIINNLTSKASDFLCLDYSKWDSTMSPCVVRLAIDILADCCEQTELTKSVVLTLKSHPMTILDAMIVQTKRGLPSGMPFTSVINSICHWLLWSAAVYKSCAEIGLHCSNLYEDAPFYTYGDDGVYAMTPMMVSLLPAIIENLRDYGLSPTAADKTEFIDVCPLNKISFLKRTFELTDIGWVSKLDKSSILRQLEWSKTTSRHMVIEETYDLAKEERGVQLEELQVAAAAHGQEFFNFVCGELVRQQAYTQFSVYSYDAARKILADRKRVVSVVPDDEFVNVMEGKARAAPQGEAARTATTASVPGTTTDGMDPGVVATTSVITAENSSASIATAGIGGPPQQVDQQETWRTNFYYNDVFTWSVADAPGSILYTVQHSPQNNPFTAVLSQMYAGWAGGMQFRFIVAGSGVFGGRLVRAVIPPGIEIGPGLEVRQFPHVVIDARSLEPVTITMPDLRPNMYHPTGDPGLVPTLVLSVYNNLINPFGGSTSAIQVTVETRPSEDFEFVMIRAPSSKTVDSISPAGLLTTPDLTGVGNDNRWNGQIVGLQPVPGGFSTCNRHWNLNGSTYGWSSPRFADIDHRKGSASYPGSNATNVLQFWYANAGSAIDNPISQVAPDGLPDMSFVPFNGPGIPAAGWVGFGAIWNSNSGAPNVTTVQAYELGFATGAPGNLQPTTNTSGAQTVAKSIYAVVTGTAQNPAGLFVMASGIISTPNASAITYTPQPDRIVTTPGTPAAAPVGKNTPIMFASVVRRTGDVNATAGSANGTQYGTGSQPLPVTIGLSLNNYSSALMPGQFFVWQLTFASGFMEIGLSVDGYFYAGTGASTTLIDLTELIDVRPVGPRPSKSTLVFNLGGTANGFSYV.

The SF3 helicase domain occupies glutamine 492–serine 653. Glycine 522–threonine 529 provides a ligand contact to ATP. Tyrosine 1014 carries the post-translational modification O-(5'-phospho-RNA)-tyrosine. Tyrosine 1014 is modified (O-UMP-tyrosine; transient). Residues glycine 1109–threonine 1244 enclose the Peptidase C24 domain. Active-site for 3CLpro activity residues include histidine 1135, aspartate 1152, and cysteine 1212. The region spanning serine 1495–leucine 1619 is the RdRp catalytic domain. Cysteine 1584 and cysteine 1591 are disulfide-bonded. The segment at proline 1774–aspartate 1796 is disordered. The segment covering threonine 1781–threonine 1792 has biased composition (low complexity).

As to quaternary structure, homodimer. In terms of assembly, homomultimer. Interacts with host type II histo-blood group structures antigens at the surface of target cells. The cofactor is Mn(2+). Specific enzymatic cleavages by its own cysteine protease yield mature proteins. The protease cleaves itself from the nascent polyprotein autocatalytically. Precursor p41 can be cleaved by viral 3CLpro into protein p19 and VPg, or cleaved by host protease into protein p23/2 and protein p18. Post-translationally, VPg is uridylylated by the polymerase and is covalently attached to the 5'-end of the polyadenylated genomic and subgenomic RNAs. This uridylylated form acts as a nucleotide-peptide primer for the polymerase.

It localises to the host cytoplasm. Its subcellular location is the host endoplasmic reticulum. It is found in the virion. The catalysed reaction is a ribonucleoside 5'-triphosphate + H2O = a ribonucleoside 5'-diphosphate + phosphate + H(+). It carries out the reaction Endopeptidase with a preference for cleavage when the P1 position is occupied by Glu-|-Xaa and the P1' position is occupied by Gly-|-Yaa.. It catalyses the reaction RNA(n) + a ribonucleoside 5'-triphosphate = RNA(n+1) + diphosphate. Functionally, together with NTPase and NS4, initiates the formation of the replication complex. Induces the proliferation of the host smooth ER membranes forming long tubular structures. These remodeled membranes probably form the viral factories that contain the replication complex. In terms of biological role, displays NTPase activity, but no helicase activity. Induces the formation of convoluted membranes derived from the host ER. These remodeled membranes probably form the viral factories that contain the replication complex. Together with NS2 and NS4, initiates the formation of the replication complex. Its function is as follows. Probable key protein responsible for the formation of membrane alterations by the virus. Induces the formation of convoluted membranes derived from the host ER. These remodeled membranes probably form the viral factories that contain the replication complex. Together with NS2 and NTPase, initiates the formation of the replication complex. Viral genome-linked protein is covalently linked to the 5'-end of the positive-strand, negative-strand genomic RNAs and subgenomic RNA. Acts as a genome-linked replication primer. May recruit ribosome to viral RNA thereby promoting viral proteins translation. Interacts with host translation initiation complex to allow the translation of viral proteins. Functionally, processes the polyprotein. 3CLpro-RdRp is first released by autocleavage, then all other proteins are cleaved. May cleave polyadenylate-binding protein thereby inhibiting cellular translation. In terms of biological role, replicates genomic and antigenomic RNA by recognizing replications specific signals. Also transcribes a subgenomic mRNA by initiating RNA synthesis internally on antigenomic RNA. This sgRNA codes for structural proteins. Catalyzes the covalent attachment VPg with viral RNAs. Its function is as follows. Capsid protein VP60 self assembles to form an icosahedral capsid with a T=3 symmetry, about 35 nm in diameter, and consisting of 180 capsid proteins. A smaller form of capsid with a diameter of 23 nm might be capsid proteins assembled as icosahedron with T=1 symmetry. The capsid encapsulate VP2 proteins and genomic or subgenomic RNA. Attaches virion to target cells by binding histo-blood group antigens, inducing endocytosis of the viral particle. Acidification of the endosome induces conformational change of capsid protein thereby injecting virus genomic RNA into host cytoplasm. This is Genome polyprotein from Oryctolagus cuniculus (Rabbit).